A 300-amino-acid chain; its full sequence is Ribonuclease HIII (300 aa).

Residues 83 to 300 (IPIIGSDEVG…THKAQALLTK (218 aa)) enclose the RNase H type-2 domain. A divalent metal cation contacts are provided by D89, E90, and D194.

This sequence belongs to the RNase HII family. RnhC subfamily. Mn(2+) serves as cofactor. Mg(2+) is required as a cofactor.

The protein localises to the cytoplasm. The catalysed reaction is Endonucleolytic cleavage to 5'-phosphomonoester.. Endonuclease that specifically degrades the RNA of RNA-DNA hybrids. The protein is Ribonuclease HIII of Streptococcus pyogenes serotype M12 (strain MGAS2096).